Consider the following 310-residue polypeptide: Zinc finger CCCH domain-containing protein 14 (310 aa).

A disordered region spans residues Glu56–Thr75. A coiled-coil region spans residues Lys84 to Lys129. The span at Gln155–Gln167 shows a compositional bias: basic and acidic residues. The tract at residues Gln155–Lys174 is disordered. 2 C3H1-type zinc fingers span residues Met232–Asp260 and Arg270–Thr298.

Highly expressed in secondary cell wall-forming tissues and the xylem cells of roots. Expressed predominantly in inflorescence stems, flowers and siliques. Highly expressed in the basal portion of stems, where cells are undergoing secondary cell wall thickening.

In terms of biological role, functions probably as a transcriptional factor that activates genes involved in secondary cell wall biosynthesis. May play a role in both transcriptional and post-transcriptional regulation. Binds to ssDNA, dsDNA, and ribohomopolymers in vitro. Maybe involved in post-transcriptional regulation of its target genes. Targets RNA of a polygalacturonase, a well-known cell wall modifying gene. Functions redudantly with C3H15 to regulate secondary cell wall formation. C3H14 and C3H15 have overlapping roles in the regulation of secondary cell wall formation and anther development. C3H14 may contribute more to secondary cell wall thickening while C3H15 could be more important in anther development. May regulate at both the transcriptional and post-transcriptional levels the expression of many genes involved in various biological processes, particularly those associated with cell wall metabolism and pollen development. This Arabidopsis thaliana (Mouse-ear cress) protein is Zinc finger CCCH domain-containing protein 14.